Here is a 205-residue protein sequence, read N- to C-terminus: Outer-membrane lipoprotein LolB (205 aa).

The first 17 residues, 1–17 (MFLRHVIVFSFIALLAG), serve as a signal peptide directing secretion. The N-palmitoyl cysteine moiety is linked to residue Cys-18. Cys-18 is lipidated: S-diacylglycerol cysteine.

This sequence belongs to the LolB family. In terms of assembly, monomer.

Its subcellular location is the cell outer membrane. Plays a critical role in the incorporation of lipoproteins in the outer membrane after they are released by the LolA protein. The polypeptide is Outer-membrane lipoprotein LolB (Pseudomonas fluorescens (strain Pf0-1)).